We begin with the raw amino-acid sequence, 241 residues long: Proteasome subunit beta type-1 (241 aa).

An N-acetylmethionine modification is found at M1. A propeptide spanning residues 1 to 28 (MLSSTAMYSAPGRDLGMEPHRAAGPLQL) is cleaved from the precursor. S58 carries O-linked (GlcNAc) serine glycosylation. 2 positions are modified to phosphoserine: S62 and S68. Phosphotyrosine is present on Y150. S162 bears the Phosphoserine mark. The residue at position 204 (K204) is an N6-acetyllysine. O-linked (GlcNAc) serine glycosylation is present at S209.

Belongs to the peptidase T1B family. As to quaternary structure, the 26S proteasome consists of a 20S proteasome core and two 19S regulatory subunits. The 20S proteasome core is a barrel-shaped complex made of 28 subunits that are arranged in four stacked rings. The two outer rings are each formed by seven alpha subunits, and the two inner rings are formed by seven beta subunits. The proteolytic activity is exerted by three beta-subunits PSMB5, PSMB6 and PSMB7. Interacts with SERPINB2. Interacts with RFPL4A. (Microbial infection) Interacts with HIV-1 protein Tat.

It localises to the cytoplasm. Its subcellular location is the nucleus. Non-catalytic component of the 20S core proteasome complex involved in the proteolytic degradation of most intracellular proteins. This complex plays numerous essential roles within the cell by associating with different regulatory particles. Associated with two 19S regulatory particles, forms the 26S proteasome and thus participates in the ATP-dependent degradation of ubiquitinated proteins. The 26S proteasome plays a key role in the maintenance of protein homeostasis by removing misfolded or damaged proteins that could impair cellular functions, and by removing proteins whose functions are no longer required. Associated with the PA200 or PA28, the 20S proteasome mediates ubiquitin-independent protein degradation. This type of proteolysis is required in several pathways including spermatogenesis (20S-PA200 complex) or generation of a subset of MHC class I-presented antigenic peptides (20S-PA28 complex). This Homo sapiens (Human) protein is Proteasome subunit beta type-1.